A 513-amino-acid polypeptide reads, in one-letter code: GMP synthase [glutamine-hydrolyzing] (513 aa).

The 198-residue stretch at 3 to 200 (SVLVLDFGSQ…LLNIAGITPD (198 aa)) folds into the Glutamine amidotransferase type-1 domain. The Nucleophile role is filled by Cys-80. Catalysis depends on residues His-174 and Glu-176. One can recognise a GMPS ATP-PPase domain in the interval 201–388 (WSSKSFIDHQ…LGIAEDILMR (188 aa)). 228 to 234 (SGGVDST) contacts ATP.

In terms of assembly, homodimer.

It catalyses the reaction XMP + L-glutamine + ATP + H2O = GMP + L-glutamate + AMP + diphosphate + 2 H(+). It participates in purine metabolism; GMP biosynthesis; GMP from XMP (L-Gln route): step 1/1. Its function is as follows. Catalyzes the synthesis of GMP from XMP. The sequence is that of GMP synthase [glutamine-hydrolyzing] from Chlorobium phaeovibrioides (strain DSM 265 / 1930) (Prosthecochloris vibrioformis (strain DSM 265)).